Consider the following 45-residue polypeptide: Myotoxin-3 (45 aa).

3 cysteine pairs are disulfide-bonded: cysteine 4–cysteine 36, cysteine 11–cysteine 30, and cysteine 18–cysteine 37.

In terms of assembly, monomer. As to expression, expressed by the venom gland.

Its subcellular location is the secreted. Its function is as follows. Cationic peptide that possesses multiple functions. It acts as a cell-penetrating peptide (CPP), and as a potent voltage-gated potassium channel (Kv) inhibitor. It exhibits antimicrobial activities, hind limb paralysis, and severe muscle necrosis by a non-enzymatic mechanism. In Crotalus viridis viridis (Prairie rattlesnake), this protein is Myotoxin-3.